A 375-amino-acid chain; its full sequence is Queuine tRNA-ribosyltransferase (375 aa).

Catalysis depends on aspartate 90, which acts as the Proton acceptor. Substrate is bound by residues 90 to 94 (DSGGF), aspartate 144, glutamine 190, and glycine 217. Residues 248–254 (GIGTPHY) form an RNA binding region. The active-site Nucleophile is aspartate 267. The interval 272 to 276 (TRIAR) is RNA binding; important for wobble base 34 recognition. The Zn(2+) site is built by cysteine 305, cysteine 307, cysteine 310, and histidine 336.

Belongs to the queuine tRNA-ribosyltransferase family. Homodimer. Within each dimer, one monomer is responsible for RNA recognition and catalysis, while the other monomer binds to the replacement base PreQ1. Zn(2+) serves as cofactor.

The catalysed reaction is 7-aminomethyl-7-carbaguanine + guanosine(34) in tRNA = 7-aminomethyl-7-carbaguanosine(34) in tRNA + guanine. It functions in the pathway tRNA modification; tRNA-queuosine biosynthesis. Functionally, catalyzes the base-exchange of a guanine (G) residue with the queuine precursor 7-aminomethyl-7-deazaguanine (PreQ1) at position 34 (anticodon wobble position) in tRNAs with GU(N) anticodons (tRNA-Asp, -Asn, -His and -Tyr). Catalysis occurs through a double-displacement mechanism. The nucleophile active site attacks the C1' of nucleotide 34 to detach the guanine base from the RNA, forming a covalent enzyme-RNA intermediate. The proton acceptor active site deprotonates the incoming PreQ1, allowing a nucleophilic attack on the C1' of the ribose to form the product. After dissociation, two additional enzymatic reactions on the tRNA convert PreQ1 to queuine (Q), resulting in the hypermodified nucleoside queuosine (7-(((4,5-cis-dihydroxy-2-cyclopenten-1-yl)amino)methyl)-7-deazaguanosine). This is Queuine tRNA-ribosyltransferase from Borrelia hermsii (strain HS1 / DAH).